Consider the following 145-residue polypeptide: Bacilliredoxin GK1781 (145 aa).

The protein belongs to the bacilliredoxin family.

The chain is Bacilliredoxin GK1781 from Geobacillus kaustophilus (strain HTA426).